A 286-amino-acid chain; its full sequence is Pyridoxal kinase PdxY (286 aa).

Substrate-binding positions include serine 9 and 44–45; that span reads TQ. Residues aspartate 111, alanine 143, glutamate 148, lysine 181, and 208-211 contribute to the ATP site; that span reads RPLV. Aspartate 222 provides a ligand contact to substrate.

Belongs to the pyridoxine kinase family. PdxY subfamily. As to quaternary structure, homodimer. It depends on Mg(2+) as a cofactor.

It carries out the reaction pyridoxal + ATP = pyridoxal 5'-phosphate + ADP + H(+). It participates in cofactor metabolism; pyridoxal 5'-phosphate salvage; pyridoxal 5'-phosphate from pyridoxal: step 1/1. Pyridoxal kinase involved in the salvage pathway of pyridoxal 5'-phosphate (PLP). Catalyzes the phosphorylation of pyridoxal to PLP. This chain is Pyridoxal kinase PdxY, found in Pectobacterium atrosepticum (strain SCRI 1043 / ATCC BAA-672) (Erwinia carotovora subsp. atroseptica).